The chain runs to 665 residues: Fructose-1,6-bisphosphatase class 3 (665 aa).

This sequence belongs to the FBPase class 3 family. Requires Mn(2+) as cofactor.

It catalyses the reaction beta-D-fructose 1,6-bisphosphate + H2O = beta-D-fructose 6-phosphate + phosphate. The protein operates within carbohydrate biosynthesis; gluconeogenesis. The polypeptide is Fructose-1,6-bisphosphatase class 3 (Clostridium acetobutylicum (strain ATCC 824 / DSM 792 / JCM 1419 / IAM 19013 / LMG 5710 / NBRC 13948 / NRRL B-527 / VKM B-1787 / 2291 / W)).